Here is a 134-residue protein sequence, read N- to C-terminus: Small ribosomal subunit protein bS16 (134 aa).

The tract at residues 79–134 is disordered; that stretch reads AGIAKRPSRNNPTKGEPGKKAQERLALAKQAEEEASAKAAEAAAAAAAPAEEAASE. The segment covering 115-134 has biased composition (low complexity); sequence AKAAEAAAAAAAPAEEAASE.

This sequence belongs to the bacterial ribosomal protein bS16 family.

The protein is Small ribosomal subunit protein bS16 of Brucella abortus (strain S19).